The chain runs to 512 residues: Maturase K (512 aa).

This sequence belongs to the intron maturase 2 family. MatK subfamily.

The protein localises to the plastid. It is found in the chloroplast. Usually encoded in the trnK tRNA gene intron. Probably assists in splicing its own and other chloroplast group II introns. The protein is Maturase K of Wolffiella gladiata (Florida mud-midget).